A 209-amino-acid polypeptide reads, in one-letter code: Large ribosomal subunit protein bL25 (209 aa).

Belongs to the bacterial ribosomal protein bL25 family. CTC subfamily. In terms of assembly, part of the 50S ribosomal subunit; part of the 5S rRNA/L5/L18/L25 subcomplex. Contacts the 5S rRNA. Binds to the 5S rRNA independently of L5 and L18.

Its function is as follows. This is one of the proteins that binds to the 5S RNA in the ribosome where it forms part of the central protuberance. In Xanthomonas campestris pv. campestris (strain B100), this protein is Large ribosomal subunit protein bL25.